A 444-amino-acid polypeptide reads, in one-letter code: MTQITPTCAPPPGPTITDRTSLRLSKAIAGKSRGWKTGLLFAGPAVIASIAYVDPGNFATNIQAGSRYGYTLLWVVAAANLIAMLFQALSAKLGIATGRNLPELCRDHFSRPLVIALWIISEIAAMATDLAEFLGGAIGLALLFRLPLIIGMVATAMITFALLLFEKRGYRVMELVIGALVATIGLCYLAEMFIAPVDWTAAAWATITPRLPDATALTIATGIVGATVMPHAVYLHSGLAQNRAAAATDDASRHRLIRFSNREVILALALAGMVNMAMVIMAASAFHIGHSDVAEIEQAYHTLTPLLGAAAAAIFLISLITSGISSSVVGTMAGQMIMQGFVHIRIPVWLRRLVTMVPAFIVILAGVNATDALVISQVILSIALPAPMIALIYFSGHRELMGPFVNHRVTQWVASAAAAIVLGLNMVLLIQAFGFTIPGLPVAP.

The next 11 membrane-spanning stretches (helical) occupy residues 39–59 (LLFA…GNFA), 69–89 (GYTL…FQAL), 109–128 (FSRP…AMAT), 146–166 (LPLI…LLFE), 175–195 (LVIG…MFIA), 215–235 (TALT…AVYL), 264–284 (VILA…MAAS), 304–324 (TPLL…TSGI), 346–366 (IPVW…ILAG), 372–392 (ALVI…IALI), and 417–437 (AAAI…GFTI).

It belongs to the NRAMP family.

The protein localises to the cell inner membrane. Functionally, h(+)-stimulated, divalent metal cation uptake system. This Granulibacter bethesdensis (strain ATCC BAA-1260 / CGDNIH1) protein is Divalent metal cation transporter MntH.